A 1129-amino-acid polypeptide reads, in one-letter code: Tyrosine-protein kinase JAK2 (1129 aa).

Residues 35 to 378 enclose the FERM domain; that stretch reads PLLQVYLYYS…GYYRLTADAH (344 aa). A Phosphotyrosine; by autocatalysis modification is found at Y117. An SH2; atypical domain is found at 399-480; sequence HGPIFMDFAI…NLKDLLTCYQ (82 aa). 2 consecutive Protein kinase domains span residues 542 to 806 and 846 to 1118; these read LIFE…NSLF and LKFL…DLAQ. Residue 852–860 participates in ATP binding; sequence LGKGNFGSV. Y865 is subject to Phosphotyrosine; by autocatalysis. K879 contributes to the ATP binding site. Residues Y963 and Y969 each carry the phosphotyrosine; by autocatalysis modification. The active-site Proton acceptor is the D973. A phosphotyrosine; by autocatalysis mark is found at Y1004 and Y1005.

This sequence belongs to the protein kinase superfamily. Tyr protein kinase family. JAK subfamily. Post-translationally, autophosphorylated, leading to regulate its activity.

It is found in the endomembrane system. Its subcellular location is the nucleus. It carries out the reaction L-tyrosyl-[protein] + ATP = O-phospho-L-tyrosyl-[protein] + ADP + H(+). Regulated by autophosphorylation, can both activate or decrease activity. Heme regulates its activity by enhancing the phosphorylation on Tyr-1004 and Tyr-1005. In terms of biological role, non-receptor tyrosine kinase involved in various processes such as cell growth, development, differentiation or histone modifications. Mediates essential signaling events in both innate and adaptive immunity. In the cytoplasm, plays a pivotal role in signal transduction via its association with cytokine receptors. Following ligand-binding to cell surface receptors, phosphorylates specific tyrosine residues on the cytoplasmic tails of the receptor, creating docking sites for STATs proteins. Subsequently, phosphorylates the STATs proteins once they are recruited to the receptor. Phosphorylated STATs then form homodimer or heterodimers and translocate to the nucleus to activate gene transcription. For example, cell stimulation with erythropoietin (EPO) during erythropoiesis leads to JAK2 autophosphorylation, activation, and its association with erythropoietin receptor (EPOR) that becomes phosphorylated in its cytoplasmic domain. Then, STAT5 (STAT5A or STAT5B) is recruited, phosphorylated and activated by JAK2. Once activated, dimerized STAT5 translocates into the nucleus and promotes the transcription of several essential genes involved in the modulation of erythropoiesis. Part of a signaling cascade that is activated by increased cellular retinol and that leads to the activation of STAT5 (STAT5A or STAT5B). In the nucleus, plays a key role in chromatin by specifically mediating phosphorylation of 'Tyr-41' of histone H3 (H3Y41ph), a specific tag that promotes exclusion of CBX5 (HP1 alpha) from chromatin. Up-regulates the potassium voltage-gated channel activity of KCNA3. This chain is Tyrosine-protein kinase JAK2, found in Gallus gallus (Chicken).